Here is a 353-residue protein sequence, read N- to C-terminus: Photosystem II D2 protein (353 aa).

At threonine 2 the chain carries N-acetylthreonine. A Phosphothreonine modification is found at threonine 2. Residues 41-61 (CAYFALGGWFTGTTFVTSWYT) traverse the membrane as a helical segment. Histidine 118 provides a ligand contact to chlorophyll a. Residues 125 to 141 (GFMLRQFELARSVQLRP) traverse the membrane as a helical segment. Residues glutamine 130 and asparagine 143 each coordinate pheophytin a. The chain crosses the membrane as a helical span at residues 153-166 (VFVSVFLIYPLGQS). Histidine 198 contributes to the chlorophyll a binding site. Residues 208-228 (AALLCAIHGATVENTLFEDGD) form a helical membrane-spanning segment. Positions 215 and 262 each coordinate a plastoquinone. A Fe cation-binding site is contributed by histidine 215. Fe cation is bound at residue histidine 269. The chain crosses the membrane as a helical span at residues 279-295 (GLWMSALGVVGLALNLR).

The protein belongs to the reaction center PufL/M/PsbA/D family. In terms of assembly, PSII is composed of 1 copy each of membrane proteins PsbA, PsbB, PsbC, PsbD, PsbE, PsbF, PsbH, PsbI, PsbJ, PsbK, PsbL, PsbM, PsbT, PsbX, PsbY, PsbZ, Psb30/Ycf12, at least 3 peripheral proteins of the oxygen-evolving complex and a large number of cofactors. It forms dimeric complexes. The D1/D2 heterodimer binds P680, chlorophylls that are the primary electron donor of PSII, and subsequent electron acceptors. It shares a non-heme iron and each subunit binds pheophytin, quinone, additional chlorophylls, carotenoids and lipids. There is also a Cl(-1) ion associated with D1 and D2, which is required for oxygen evolution. The PSII complex binds additional chlorophylls, carotenoids and specific lipids. serves as cofactor.

It is found in the plastid. The protein localises to the chloroplast thylakoid membrane. It carries out the reaction 2 a plastoquinone + 4 hnu + 2 H2O = 2 a plastoquinol + O2. Functionally, photosystem II (PSII) is a light-driven water:plastoquinone oxidoreductase that uses light energy to abstract electrons from H(2)O, generating O(2) and a proton gradient subsequently used for ATP formation. It consists of a core antenna complex that captures photons, and an electron transfer chain that converts photonic excitation into a charge separation. The D1/D2 (PsbA/PsbD) reaction center heterodimer binds P680, the primary electron donor of PSII as well as several subsequent electron acceptors. D2 is needed for assembly of a stable PSII complex. In Spinacia oleracea (Spinach), this protein is Photosystem II D2 protein.